Consider the following 308-residue polypeptide: Aspartate carbamoyltransferase catalytic subunit (308 aa).

Positions 51 and 52 each coordinate carbamoyl phosphate. L-aspartate is bound at residue Lys79. Residues Arg101, His130, and Gln133 each coordinate carbamoyl phosphate. Positions 163 and 215 each coordinate L-aspartate. Carbamoyl phosphate is bound by residues Ala258 and Pro259.

It belongs to the aspartate/ornithine carbamoyltransferase superfamily. ATCase family. In terms of assembly, heterododecamer (2C3:3R2) of six catalytic PyrB chains organized as two trimers (C3), and six regulatory PyrI chains organized as three dimers (R2).

The catalysed reaction is carbamoyl phosphate + L-aspartate = N-carbamoyl-L-aspartate + phosphate + H(+). Its pathway is pyrimidine metabolism; UMP biosynthesis via de novo pathway; (S)-dihydroorotate from bicarbonate: step 2/3. Its function is as follows. Catalyzes the condensation of carbamoyl phosphate and aspartate to form carbamoyl aspartate and inorganic phosphate, the committed step in the de novo pyrimidine nucleotide biosynthesis pathway. In Pediococcus pentosaceus (strain ATCC 25745 / CCUG 21536 / LMG 10740 / 183-1w), this protein is Aspartate carbamoyltransferase catalytic subunit.